Consider the following 436-residue polypeptide: Trigger factor (436 aa).

Residues glycine 161–proline 246 form the PPIase FKBP-type domain.

Belongs to the FKBP-type PPIase family. Tig subfamily.

The protein resides in the cytoplasm. It carries out the reaction [protein]-peptidylproline (omega=180) = [protein]-peptidylproline (omega=0). Involved in protein export. Acts as a chaperone by maintaining the newly synthesized protein in an open conformation. Functions as a peptidyl-prolyl cis-trans isomerase. This Azotobacter vinelandii (strain DJ / ATCC BAA-1303) protein is Trigger factor.